Here is a 226-residue protein sequence, read N- to C-terminus: MKLILMMNLFEMFDPSTSNNLSMNWLFMMLPIIIFPSIFWLIQSRIMFIMKTLMNFMYNEFKVVSKSKYQSNIIIFISLMLYIMITNIFSLIPYVFTLTSHLLLNMILSLTLWFSFLIYLIYNNYIMFLSHLVPLNSPVFLMNFMVIIELISLIIRPWTLSIRLSANLISGHLILTLLGIFISNFISILPINLMIQNMLLTLEIFMSMIQSYVFSILLILYFSESN.

Helical transmembrane passes span 22 to 42 (SMNW…FWLI), 73 to 93 (IIIF…SLIP), 102 to 122 (LLLN…YLIY), 135 to 155 (LNSP…SLII), 173 to 193 (LILT…PINL), and 202 to 222 (LEIF…ILYF).

The protein belongs to the ATPase A chain family. As to quaternary structure, F-type ATPases have 2 components, CF(1) - the catalytic core - and CF(0) - the membrane proton channel. CF(1) has five subunits: alpha(3), beta(3), gamma(1), delta(1), epsilon(1). CF(0) has three main subunits: a, b and c.

It is found in the mitochondrion inner membrane. Mitochondrial membrane ATP synthase (F(1)F(0) ATP synthase or Complex V) produces ATP from ADP in the presence of a proton gradient across the membrane which is generated by electron transport complexes of the respiratory chain. F-type ATPases consist of two structural domains, F(1) - containing the extramembraneous catalytic core and F(0) - containing the membrane proton channel, linked together by a central stalk and a peripheral stalk. During catalysis, ATP synthesis in the catalytic domain of F(1) is coupled via a rotary mechanism of the central stalk subunits to proton translocation. Key component of the proton channel; it may play a direct role in the translocation of protons across the membrane. The sequence is that of ATP synthase subunit a (ATP6) from Apis mellifera ligustica (Common honeybee).